We begin with the raw amino-acid sequence, 305 residues long: Ribosomal RNA small subunit methyltransferase H (305 aa).

Residues 46–48, aspartate 65, phenylalanine 92, aspartate 108, and histidine 115 contribute to the S-adenosyl-L-methionine site; that span reads GGH.

This sequence belongs to the methyltransferase superfamily. RsmH family.

Its subcellular location is the cytoplasm. It carries out the reaction cytidine(1402) in 16S rRNA + S-adenosyl-L-methionine = N(4)-methylcytidine(1402) in 16S rRNA + S-adenosyl-L-homocysteine + H(+). Functionally, specifically methylates the N4 position of cytidine in position 1402 (C1402) of 16S rRNA. This chain is Ribosomal RNA small subunit methyltransferase H, found in Trichormus variabilis (strain ATCC 29413 / PCC 7937) (Anabaena variabilis).